A 62-amino-acid chain; its full sequence is Large ribosomal subunit protein eL37 (62 aa).

The Zn(2+) site is built by C20, C23, C35, and C38. The C4-type zinc finger occupies C20–C38.

The protein belongs to the eukaryotic ribosomal protein eL37 family. The cofactor is Zn(2+).

Binds to the 23S rRNA. This is Large ribosomal subunit protein eL37 (rpl37e) from Pyrococcus abyssi (strain GE5 / Orsay).